A 375-amino-acid chain; its full sequence is All-trans-retinol dehydrogenase [NAD(+)] ADH1B (375 aa).

An N-acetylserine modification is found at Ser-2. Ser-23 bears the Phosphoserine mark. At Tyr-35 the chain carries Phosphotyrosine. Residues Cys-47, His-68, Cys-98, Cys-101, Cys-104, Cys-112, and Cys-175 each contribute to the Zn(2+) site. NAD(+)-binding positions include 200-205 (GLGGVG), Asp-224, Lys-229, 293-295 (VGV), and Arg-370.

The protein belongs to the zinc-containing alcohol dehydrogenase family. Dimer of identical or non-identical chains of three types; alpha, beta and gamma. Zn(2+) is required as a cofactor.

The protein localises to the cytoplasm. It catalyses the reaction all-trans-retinol + NAD(+) = all-trans-retinal + NADH + H(+). It carries out the reaction all-trans-4-hydroxyretinol + NAD(+) = all-trans-4-hydroxyretinal + NADH + H(+). The catalysed reaction is all-trans-4-oxoretinol + NAD(+) = all-trans-4-oxoretinal + NADH + H(+). Catalyzes the NAD-dependent oxidation of all-trans-retinol and its derivatives such as all-trans-4-hydroxyretinol and may participate in retinoid metabolism. In vitro can also catalyze the NADH-dependent reduction of all-trans-retinal and its derivatives such as all-trans-4-oxoretinal. Catalyzes in the oxidative direction with higher efficiency. Has the same affinity for all-trans-4-hydroxyretinol and all-trans-4-oxoretinal. The sequence is that of All-trans-retinol dehydrogenase [NAD(+)] ADH1B from Homo sapiens (Human).